The chain runs to 504 residues: Splicing factor SF3a60 homolog (504 aa).

Position 2 is an N-acetylserine (S2). 2 disordered regions span residues 293-319 (DKKH…SENA) and 355-374 (YEEM…LESD). The segment covering 356 to 374 (EEMEGEREGEEANTELESD) has biased composition (acidic residues). Phosphoserine is present on S373. The Matrin-type zinc-finger motif lies at 409-440 (FKCEICGNYSYWGRRAFERHFKEWRHQHGMRC).

This sequence belongs to the SF3A3 family. Expressed at moderate levels in all sporophytic tissues with strongest expression in gametophytes.

The protein resides in the nucleus. Splicing factor homolog to SF3a60 that may be involved in pre-spliceosome formation. Is necessary for gametic cell fate determination. The chain is Splicing factor SF3a60 homolog from Arabidopsis thaliana (Mouse-ear cress).